We begin with the raw amino-acid sequence, 80 residues long: Acyl carrier protein (80 aa).

The Carrier domain occupies 1-79; sequence MSQEEILQKV…DAVKFIEAKK (79 aa). Residue serine 39 is modified to O-(pantetheine 4'-phosphoryl)serine.

The protein belongs to the acyl carrier protein (ACP) family. 4'-phosphopantetheine is transferred from CoA to a specific serine of apo-ACP by AcpS. This modification is essential for activity because fatty acids are bound in thioester linkage to the sulfhydryl of the prosthetic group.

The protein localises to the cytoplasm. The protein operates within lipid metabolism; fatty acid biosynthesis. Its function is as follows. Carrier of the growing fatty acid chain in fatty acid biosynthesis. The polypeptide is Acyl carrier protein (Prochlorococcus marinus (strain MIT 9515)).